The primary structure comprises 348 residues: Selenide, water dikinase (348 aa).

Cys-17 is an active-site residue. ATP-binding positions include Lys-20 and 48-50 (TRD). Asp-51 provides a ligand contact to Mg(2+). Residues Asp-68, Asp-91, and 139 to 141 (GHS) contribute to the ATP site. Asp-91 provides a ligand contact to Mg(2+). Asp-227 contributes to the Mg(2+) binding site.

This sequence belongs to the selenophosphate synthase 1 family. Class I subfamily. Homodimer. Requires Mg(2+) as cofactor.

It carries out the reaction hydrogenselenide + ATP + H2O = selenophosphate + AMP + phosphate + 2 H(+). Its function is as follows. Synthesizes selenophosphate from selenide and ATP. This chain is Selenide, water dikinase, found in Yersinia pseudotuberculosis serotype I (strain IP32953).